The chain runs to 236 residues: MGVEGCTKCIKYLLFVFNFVFWLAGGVILGVALWLRHDPQTTNLLYLELGDRPAPNTFYVGIYILIAVGAVMMFVGFLGCYGAIQESQCLLGTFFTCLVILFACEVAAGIWGFVNKDQIAKDVKQFYDQALQQAIVDDDANNAKAVVKTFHETLNCCGSNTLMTLTTSVLKNSLCPSSGNVITNLFKEDCHGKIDELFSGKLYLIGIAAIVVAVIMIFEMILSMVLCCGIRNSSVY.

The Cytoplasmic portion of the chain corresponds to 1 to 12; sequence MGVEGCTKCIKY. A helical transmembrane segment spans residues 13–33; it reads LLFVFNFVFWLAGGVILGVAL. Residues 34–63 lie on the Extracellular side of the membrane; the sequence is WLRHDPQTTNLLYLELGDRPAPNTFYVGIY. Residues 64–84 form a helical membrane-spanning segment; the sequence is ILIAVGAVMMFVGFLGCYGAI. At 85-89 the chain is on the cytoplasmic side; that stretch reads QESQC. A helical membrane pass occupies residues 90–112; that stretch reads LLGTFFTCLVILFACEVAAGIWG. The Extracellular segment spans residues 113-201; sequence FVNKDQIAKD…GKIDELFSGK (89 aa). Disulfide bonds link Cys156/Cys190 and Cys157/Cys175. Residues 202 to 224 form a helical membrane-spanning segment; that stretch reads LYLIGIAAIVVAVIMIFEMILSM. Residue Glu219 coordinates cholesterol. Over 225–236 the chain is Cytoplasmic; the sequence is VLCCGIRNSSVY.

Belongs to the tetraspanin (TM4SF) family. Homodimer. Part of a complex composed of CD19, CR2/CD21, CD81 and IFITM1/CD225 in the membrane of mature B cells. Interacts (via the second extracellular domain) with CD19; this interaction is initiated early during biosynthesis in the ER and enables trafficking of only properly folded CD19. Part of a complex that includes MHC class II/HLA-DR molecules and IFITM1. Interacts with IFITM1. Interacts with IFITM2 and IFITM3. Part of integrin-tetraspanin complex composed of CD9, CD81, beta-1 and beta-2 integrins in the membrane of monocyte/macrophages. Interacts (via the second extracellular domain) with integrin ITGAV:ITGB3. Interacts with CD247/CD3 zeta, ICAM1 and CD9 at the immune synapse on T cell membrane. Part of a GPCR-tetraspanin complex consisting at least of ADGRG1, CD81, possibly CD9, and GNA11 in which CD81 enhances the association of ADGRG1 with GNA11. Part of a complex composed of CD9, CD81, PTGFRN and IGSF8. Interacts directly with IGSF8. Interacts with CD53 and SCIMP. Interacts with SAMHD1 (via its C-terminus). Interacts with glypican GPC3 and with the transcriptional repressor HHEX; binding to GPC3 decreases the availability of free CD81 for binding to HHEX, resulting in nuclear translocation of HHEX and transcriptional repression. Interacts with CLDN1. Interacts with CLDN6 and CLDN9. Post-translationally, not glycosylated. In terms of processing, likely constitutively palmitoylated at low levels. Protein palmitoylation is up-regulated upon coligation of BCR and CD9-C2R-CD81 complexes in lipid rafts.

Its subcellular location is the cell membrane. It localises to the basolateral cell membrane. In terms of biological role, structural component of specialized membrane microdomains known as tetraspanin-enriched microdomains (TERMs), which act as platforms for receptor clustering and signaling. Essential for trafficking and compartmentalization of CD19 receptor on the surface of activated B cells. Upon initial encounter with microbial pathogens, enables the assembly of CD19-CR2/CD21 and B cell receptor (BCR) complexes at signaling TERMs, lowering the threshold dose of antigen required to trigger B cell clonal expansion and antibody production. In T cells, facilitates the localization of CD247/CD3 zeta at antigen-induced synapses with B cells, providing for costimulation and polarization toward T helper type 2 phenotype. Present in MHC class II compartments, may also play a role in antigen presentation. Can act both as positive and negative regulator of homotypic or heterotypic cell-cell fusion processes. Positively regulates sperm-egg fusion and may be involved in acrosome reaction. In myoblasts, associates with CD9 and PTGFRN and inhibits myotube fusion during muscle regeneration. In macrophages, associates with CD9 and beta-1 and beta-2 integrins, and prevents macrophage fusion into multinucleated giant cells specialized in ingesting complement-opsonized large particles. Also prevents the fusion of mononuclear cell progenitors into osteoclasts in charge of bone resorption. May regulate the compartmentalization of enzymatic activities. In T cells, defines the subcellular localization of dNTPase SAMHD1 and permits its degradation by the proteasome, thereby controlling intracellular dNTP levels. Also involved in cell adhesion and motility. Positively regulates integrin-mediated adhesion of macrophages, particularly relevant for the inflammatory response in the lung. The protein is CD81 antigen (CD81) of Bos taurus (Bovine).